The primary structure comprises 613 residues: Apoptosis-inducing factor 1, mitochondrial (613 aa).

Short sequence motifs (mitochondrial localization signal) lie at residues 1-31 (MFRCGGLAAGALKQKLVPLVRTVCVRSPRQR) and 63-89 (KIDNSVLVLIVGLSTVGAGAYAYKTMK). The N-terminal 54 residues, 1–54 (MFRCGGLAAGALKQKLVPLVRTVCVRSPRQRNRLPGNLFQRWHVPLELQMTRQM), are a transit peptide targeting the mitochondrion. The propeptide at 55 to 101 (ASSGASGGKIDNSVLVLIVGLSTVGAGAYAYKTMKEDEKRYNERISG) is removed in mature form. Residues 100-127 (SGLGLTPEQKQKKAALSASEGEEVPQDK) are disordered. Position 105 is a phosphothreonine (T105). An N6-succinyllysine modification is found at K109. S116 and S118 each carry phosphoserine. Residues 134–483 (FLLIGGGTAA…KPYWHQSMFW (350 aa)) are FAD-dependent oxidoreductase. FAD is bound by residues 138-142 (GGGTA), 164-165 (ED), R172, and K177. Residue W196 coordinates NAD(+). V233 lines the FAD pocket. Residue K255 forms a Glycyl lysine isopeptide (Lys-Gly) (interchain with G-Cter in ubiquitin) linkage. The residue at position 268 (S268) is a Phosphoserine. Residue R285 participates in FAD binding. Phosphoserine is present on S292. Residues 308–311 (GGFL), E336, and K342 each bind NAD(+). At S371 the chain carries Phosphoserine. Position 388 is an N6-acetyllysine (K388). G399 is an NAD(+) binding site. D438 provides a ligand contact to FAD. Residues 446-451 (KLGRRR) carry the Nuclear localization signal motif. NAD(+) is bound by residues 453–454 (EH), W483, and E493. FAD is bound by residues 454-455 (HH) and W483. Polar residues predominate over residues 513–529 (AQDNPKSATEQSGTGIR). The interval 513–554 (AQDNPKSATEQSGTGIRSESETESEASEITIPPSTPAVPQAP) is disordered. Residue T521 is modified to Phosphothreonine. 2 positions are modified to phosphoserine: S524 and S530. N583 is an NAD(+) binding site. The residue at position 593 (K593) is an N6-acetyllysine.

This sequence belongs to the FAD-dependent oxidoreductase family. Monomer (oxidized form). Homodimer (reduced form). Upon reduction with NADH, undergoes dimerization and forms tight, long-lived FADH2-NAD charge transfer complexes (CTC) resistant to oxidation. Also dimerizes with isoform 3 preventing its release from mitochondria. Interacts with XIAP/BIRC4. Interacts (via N-terminus) with EIF3G (via C-terminus). Interacts with PRELID1. Interacts with CHCHD4; the interaction increases in presence of NADH. Interacts with processed form of PARP1 (Poly [ADP-ribose] polymerase 1, processed C-terminus); interaction is mediated with poly-ADP-ribose chains attached to PARP1, promoting translocation into the nucleus. Requires FAD as cofactor. In terms of processing, under normal conditions, a 54-residue N-terminal segment is first proteolytically removed during or just after translocation into the mitochondrial intermembrane space (IMS) by the mitochondrial processing peptidase (MPP) to form the inner-membrane-anchored mature form (AIFmit). During apoptosis, it is further proteolytically processed at amino-acid position 101 leading to the generation of the mature form, which is confined to the mitochondrial IMS in a soluble form (AIFsol). AIFsol is released to the cytoplasm in response to specific death signals, and translocated to the nucleus, where it induces nuclear apoptosis in a caspase-independent manner. Post-translationally, ubiquitination by XIAP/BIRC4 does not lead to proteasomal degradation. Ubiquitination at Lys-255 by XIAP/BIRC4 blocks its ability to bind DNA and induce chromatin degradation, thereby inhibiting its ability to induce cell death. In terms of tissue distribution, expressed in all tested tissues. Detected in muscle and skin fibroblasts (at protein level). Expressed in osteoblasts (at protein level). As to expression, brain specific. Expressed in all tested tissues except brain. In terms of tissue distribution, isoform 5 is frequently down-regulated in human cancers.

It localises to the mitochondrion intermembrane space. Its subcellular location is the mitochondrion inner membrane. It is found in the cytoplasm. The protein resides in the nucleus. The protein localises to the perinuclear region. It localises to the mitochondrion. Its subcellular location is the cytosol. It carries out the reaction A + NADH + H(+) = AH2 + NAD(+). Its function is as follows. Functions both as NADH oxidoreductase and as regulator of apoptosis. In response to apoptotic stimuli, it is released from the mitochondrion intermembrane space into the cytosol and to the nucleus, where it functions as a proapoptotic factor in a caspase-independent pathway. Release into the cytoplasm is mediated upon binding to poly-ADP-ribose chains. The soluble form (AIFsol) found in the nucleus induces 'parthanatos' i.e. caspase-independent fragmentation of chromosomal DNA. Binds to DNA in a sequence-independent manner. Interacts with EIF3G, and thereby inhibits the EIF3 machinery and protein synthesis, and activates caspase-7 to amplify apoptosis. Plays a critical role in caspase-independent, pyknotic cell death in hydrogen peroxide-exposed cells. In contrast, participates in normal mitochondrial metabolism. Plays an important role in the regulation of respiratory chain biogenesis by interacting with CHCHD4 and controlling CHCHD4 mitochondrial import. Has NADH oxidoreductase activity. Does not induce nuclear apoptosis. In terms of biological role, pro-apoptotic isoform. The protein is Apoptosis-inducing factor 1, mitochondrial of Homo sapiens (Human).